We begin with the raw amino-acid sequence, 1312 residues long: uncharacterized protein (1312 aa).

The signal sequence occupies residues 1 to 20 (MRNNLIYTMFLSCLHFETFC). Positions 299-344 (TTTSSSTMLSSTTLLTTETETRESSSTGSTQTTTPSTEPSTTITTP) are enriched in low complexity. 8 disordered regions span residues 299–503 (TTTS…TTTY), 565–609 (EITS…PTGG), 645–692 (KETR…PTGG), 749–775 (SSSS…PTGG), 812–864 (KTRT…GGTT), 899–942 (KTRT…PTGG), 1048–1079 (KTRT…TGGT), and 1114–1165 (NTTR…TLET). The segment covering 345–357 (MEQSSTVSSVQKT) has biased composition (polar residues). Positions 365–503 (SSSTTVPTSA…STPATPTTTY (139 aa)) are enriched in low complexity. A compositionally biased stretch (basic and acidic residues) spans 565–574 (EITSDAEGCK). Residues 576-609 (TSSTPTPSSTSVHSTTATPSTTPGTTTYNWPTGG) are compositionally biased toward low complexity. Residues 645–659 (KETRTETTTDADGCK) show a composition bias toward basic and acidic residues. Over residues 660–692 (KTSSTSSSTPSLKHSTTPTPTPGTTTYNWPTGG) the composition is skewed to low complexity. Basic and acidic residues predominate over residues 813–825 (TRTETTTDAEGCK). Low complexity predominate over residues 826 to 864 (KTSSTSKISTTPTSPTSSKPTPTSTSMTTTYNWPTGGTT). Polar residues predominate over residues 899 to 908 (KTRTETTTDA). Positions 914-942 (TSSTSLKPTSPSSSTASPPTTTYNWPTGG) are enriched in low complexity. Polar residues predominate over residues 1048–1057 (KTRTETTSDA). Residues 1063–1076 (TSTTQTPTTFNWPT) show a composition bias toward low complexity. A compositionally biased stretch (polar residues) spans 1114 to 1123 (NTTRTETTSD). Residues 1130 to 1154 (TSSGTTSTMSPGTTGGTTVSRTTNS) are compositionally biased toward low complexity. The span at 1155–1164 (NNPIDSSTLE) shows a compositional bias: polar residues. The Sushi domain occupies 1239–1306 (ATCSSLNLNL…WSGTPEKCVA (68 aa)). Intrachain disulfides connect C1241-C1291 and C1273-C1304.

The protein localises to the secreted. This is an uncharacterized protein from Caenorhabditis elegans.